A 262-amino-acid chain; its full sequence is Indole-3-glycerol phosphate synthase (262 aa).

Belongs to the TrpC family.

It catalyses the reaction 1-(2-carboxyphenylamino)-1-deoxy-D-ribulose 5-phosphate + H(+) = (1S,2R)-1-C-(indol-3-yl)glycerol 3-phosphate + CO2 + H2O. Its pathway is amino-acid biosynthesis; L-tryptophan biosynthesis; L-tryptophan from chorismate: step 4/5. The polypeptide is Indole-3-glycerol phosphate synthase (Bordetella bronchiseptica (strain ATCC BAA-588 / NCTC 13252 / RB50) (Alcaligenes bronchisepticus)).